A 173-amino-acid polypeptide reads, in one-letter code: Adenine phosphoribosyltransferase (173 aa).

It belongs to the purine/pyrimidine phosphoribosyltransferase family. Homodimer.

The protein localises to the cytoplasm. It carries out the reaction AMP + diphosphate = 5-phospho-alpha-D-ribose 1-diphosphate + adenine. It participates in purine metabolism; AMP biosynthesis via salvage pathway; AMP from adenine: step 1/1. Its function is as follows. Catalyzes a salvage reaction resulting in the formation of AMP, that is energically less costly than de novo synthesis. The protein is Adenine phosphoribosyltransferase of Listeria monocytogenes serovar 1/2a (strain ATCC BAA-679 / EGD-e).